A 73-amino-acid polypeptide reads, in one-letter code: Conotoxin Lt9a (73 aa).

A signal peptide spans 1–23; sequence MTLTKSAVLILVLLLAFDNFADV. Residues 24-40 constitute a propeptide that is removed on maturation; the sequence is QPGLITMGGGRLSNLLS. 3 disulfide bridges follow: cysteine 48–cysteine 62, cysteine 53–cysteine 64, and cysteine 59–cysteine 69.

This sequence belongs to the conotoxin P superfamily. As to expression, expressed by the venom duct.

It is found in the secreted. Functionally, probable neurotoxin that inhibits ion channels. The sequence is that of Conotoxin Lt9a from Conus litteratus (Lettered cone).